Here is a 149-residue protein sequence, read N- to C-terminus: Arginine repressor (149 aa).

It belongs to the ArgR family.

It is found in the cytoplasm. Its pathway is amino-acid biosynthesis; L-arginine biosynthesis [regulation]. In terms of biological role, regulates arginine biosynthesis genes. The polypeptide is Arginine repressor (Geobacillus sp. (strain WCH70)).